We begin with the raw amino-acid sequence, 951 residues long: Leucine-rich repeat-containing G-protein coupled receptor 4 (951 aa).

A signal peptide spans 1–24 (MPGPLGLLCFLALGLLGSAGPSGA). In terms of domain architecture, LRRNT spans 25–57 (APPLCAAPCSCDGDRRVDCSGKGLTAVPEGLSA). At 25–544 (APPLCAAPCS…LLGSWMIRLT (520 aa)) the chain is on the extracellular side. 2 cysteine pairs are disulfide-bonded: Cys-29–Cys-35 and Cys-33–Cys-43. LRR repeat units follow at residues 58–79 (FTQA…AFKN), 82–103 (FLEE…ALSG), 106–127 (ELKV…AIRG), 130–151 (ALQS…SFEG), 154–177 (QLRH…SNLP), 178–199 (TLQA…AFTN), 202–223 (SLVV…CFDG), 226–247 (NLET…IKAL), 249–270 (SLKE…AFDG), and 273–294 (LLRT…AFHN). Asn-68 carries an N-linked (GlcNAc...) asparagine glycan. N-linked (GlcNAc...) asparagine glycosylation occurs at Asn-199. 2 N-linked (GlcNAc...) asparagine glycosylation sites follow: Asn-294 and Asn-314. LRR repeat units lie at residues 320-341 (HLES…LCQE), 344-365 (MLRT…NGCH), 366-387 (ALEE…TFQG), 390-411 (SLRI…AFAT), and 414-435 (PITN…GLNG). The cysteines at positions 339 and 364 are disulfide-linked. Disulfide bonds link Cys-470-Cys-522 and Cys-471-Cys-476. Asn-505 carries an N-linked (GlcNAc...) asparagine glycan. The helical transmembrane segment at 545-565 (VWFIFLVALFFNLLVILTTFA) threads the bilayer. Residues 566 to 575 (SCTSLPSSKL) are Cytoplasmic-facing. A helical membrane pass occupies residues 576–596 (FIGLISVSNLFMGIYTGILTF). Over 597–620 (LDAVSWGRFAEFGIWWETGSGCKV) the chain is Extracellular. Cysteines 618 and 693 form a disulfide. Residues 621–641 (AGFLAVFSSESAIFLLMLATV) form a helical membrane-spanning segment. Residues 642 to 661 (ERSLSAKDIMKNGKSNHLKQ) are Cytoplasmic-facing. A helical transmembrane segment spans residues 662-682 (FRVAALLAFLGATVAGCFPLF). Residues 683-703 (HRGEYSASPLCLPFPTGETPS) are Extracellular-facing. The helical transmembrane segment at 704 to 724 (LGFTVTLVLLNSLAFLLMAVI) threads the bilayer. At 725–756 (YTKLYCNLEKEDLSENSQSSMIKHVAWLIFTN) the chain is on the cytoplasmic side. A helical membrane pass occupies residues 757–777 (CIFFCPVAFFSFAPLITAISI). Over 778–783 (SPEIMK) the chain is Extracellular. The helical transmembrane segment at 784–804 (SVTLIFFPLPACLNPVLYVFF) threads the bilayer. At 805-951 (NPKFKEDWKL…YAYNLPRVKD (147 aa)) the chain is on the cytoplasmic side. Ser-920 bears the Phosphoserine mark.

The protein belongs to the G-protein coupled receptor 1 family. As to expression, expressed in multiple steroidogenic tissues: placenta, ovary, testis and adrenal. Expressed also in spinal cord, thyroid, stomach, trachea, heart, pancreas, kidney, prostate and spleen.

It localises to the cell membrane. Receptor for R-spondins that potentiates the canonical Wnt signaling pathway and is involved in the formation of various organs. Upon binding to R-spondins (RSPO1, RSPO2, RSPO3 or RSPO4), associates with phosphorylated LRP6 and frizzled receptors that are activated by extracellular Wnt receptors, triggering the canonical Wnt signaling pathway to increase expression of target genes. In contrast to classical G-protein coupled receptors, does not activate heterotrimeric G-proteins to transduce the signal. Its function as activator of the Wnt signaling pathway is required for the development of various organs, including liver, kidney, intestine, bone, reproductive tract and eye. May also act as a receptor for norrin (NDP), such results however require additional confirmation in vivo. Required during spermatogenesis to activate the Wnt signaling pathway in peritubular myoid cells. Required for the maintenance of intestinal stem cells and Paneth cell differentiation in postnatal intestinal crypts. Acts as a regulator of bone formation and remodeling. Involved in kidney development; required for maintaining the ureteric bud in an undifferentiated state. Involved in the development of the anterior segment of the eye. Required during erythropoiesis. Also acts as a negative regulator of innate immunity by inhibiting TLR2/TLR4 associated pattern-recognition and pro-inflammatory cytokine production. Plays an important role in regulating the circadian rhythms of plasma lipids, partially through regulating the rhythmic expression of MTTP. Required for proper development of GnRH neurons (gonadotropin-releasing hormone expressing neurons) that control the release of reproductive hormones from the pituitary gland. This chain is Leucine-rich repeat-containing G-protein coupled receptor 4 (LGR4), found in Homo sapiens (Human).